Here is a 102-residue protein sequence, read N- to C-terminus: NADH-quinone oxidoreductase subunit K 1 (102 aa).

3 helical membrane-spanning segments follow: residues 5 to 25 (FEHVLILAGILFALGLVCVLV), 30 to 50 (LIMLLIGIEVMLNAAMLAFVG), and 65 to 85 (LVIMALTSAEVSLALAMVVYL).

It belongs to the complex I subunit 4L family. NDH-1 is composed of 14 different subunits. Subunits NuoA, H, J, K, L, M, N constitute the membrane sector of the complex.

Its subcellular location is the cell inner membrane. It carries out the reaction a quinone + NADH + 5 H(+)(in) = a quinol + NAD(+) + 4 H(+)(out). Its function is as follows. NDH-1 shuttles electrons from NADH, via FMN and iron-sulfur (Fe-S) centers, to quinones in the respiratory chain. The immediate electron acceptor for the enzyme in this species is believed to be ubiquinone. Couples the redox reaction to proton translocation (for every two electrons transferred, four hydrogen ions are translocated across the cytoplasmic membrane), and thus conserves the redox energy in a proton gradient. This Geobacter metallireducens (strain ATCC 53774 / DSM 7210 / GS-15) protein is NADH-quinone oxidoreductase subunit K 1.